Reading from the N-terminus, the 264-residue chain is Thymidylate synthase (264 aa).

A dUMP-binding site is contributed by Arg21. A (6R)-5,10-methylene-5,6,7,8-tetrahydrofolate-binding site is contributed by His51. Residue Arg126–Arg127 participates in dUMP binding. Cys146 serves as the catalytic Nucleophile. DUMP-binding positions include Arg166 to Asp169, Asn177, and His207 to Tyr209. Asp169 is a (6R)-5,10-methylene-5,6,7,8-tetrahydrofolate binding site. Ser263 contacts (6R)-5,10-methylene-5,6,7,8-tetrahydrofolate.

The protein belongs to the thymidylate synthase family. Bacterial-type ThyA subfamily. In terms of assembly, homodimer.

Its subcellular location is the cytoplasm. It catalyses the reaction dUMP + (6R)-5,10-methylene-5,6,7,8-tetrahydrofolate = 7,8-dihydrofolate + dTMP. It functions in the pathway pyrimidine metabolism; dTTP biosynthesis. Catalyzes the reductive methylation of 2'-deoxyuridine-5'-monophosphate (dUMP) to 2'-deoxythymidine-5'-monophosphate (dTMP) while utilizing 5,10-methylenetetrahydrofolate (mTHF) as the methyl donor and reductant in the reaction, yielding dihydrofolate (DHF) as a by-product. This enzymatic reaction provides an intracellular de novo source of dTMP, an essential precursor for DNA biosynthesis. This Shouchella clausii (strain KSM-K16) (Alkalihalobacillus clausii) protein is Thymidylate synthase.